The chain runs to 228 residues: Lipoprotein-releasing system ATP-binding protein LolD (228 aa).

One can recognise an ABC transporter domain in the interval 6–228 (LRLSGIEKTY…LSDGRLSAES (223 aa)). Residue 43 to 50 (APSGAGKS) coordinates ATP.

This sequence belongs to the ABC transporter superfamily. Lipoprotein translocase (TC 3.A.1.125) family. In terms of assembly, the complex is composed of two ATP-binding proteins (LolD) and two transmembrane proteins (LolC and LolE).

The protein resides in the cell inner membrane. In terms of biological role, part of the ABC transporter complex LolCDE involved in the translocation of mature outer membrane-directed lipoproteins, from the inner membrane to the periplasmic chaperone, LolA. Responsible for the formation of the LolA-lipoprotein complex in an ATP-dependent manner. This Ruegeria pomeroyi (strain ATCC 700808 / DSM 15171 / DSS-3) (Silicibacter pomeroyi) protein is Lipoprotein-releasing system ATP-binding protein LolD.